The following is a 305-amino-acid chain: MRLSFFTALSAVASLGYALPGKLQSRDVSTSELDQFEFWVQYAAASYYEADYTAQVGDKLSCSKGNCPEVEATGATVSYDFSDSTITDTAGYIAVDHTNSAVVLAFRGSYSVRNWVADATFVHTNPGLCDGCLAELGFWSSWKLVRDDIIKELKEVVAQNPNYELVVVGHSLGAAVATLAATDLRGKGYPSAKLYAYASPRVGNAALAKYITAQGNNFRFTHTNDPVPKLPLLSMGYVHVSPEYWITSPNNATVSTSDIKVIDGDVSFDGNTGTGLPLLTDFEAHIWYFVQVDAGKGPGLPFKRV.

Residues 1-26 form the signal peptide; that stretch reads MRLSFFTALSAVASLGYALPGKLQSR. 2 disulfide bridges follow: Cys-62–Cys-67 and Cys-129–Cys-132. Ser-171 (nucleophile) is an active-site residue. Asp-225 (charge relay system) is an active-site residue. N-linked (GlcNAc...) asparagine glycosylation is present at Asn-251. The Charge relay system role is filled by His-285. The propeptide at 303-305 is removed in mature form; that stretch reads KRV.

It belongs to the AB hydrolase superfamily. Lipase family. Class 3 subfamily. Post-translationally, multiple forms of this lipase are due to the presence of different carbohydrates, which may contribute to the stability of this lipase but not to the enzyme activity.

It localises to the secreted. The enzyme catalyses a monoacylglycerol + H2O = glycerol + a fatty acid + H(+). The catalysed reaction is a diacylglycerol + H2O = a monoacylglycerol + a fatty acid + H(+). Its activity is regulated as follows. Both Fe(3+) and Hg(2+) inhibit the activity significantly. Secreted lipase strictly specific to mono- and diacylglycerol, but not triacylglycerol. Hydrolyzes long-chain monoacylglycerols most efficiently with the highest activities observed on 1- and 3- monopalmitoyl-sn-glycerol or 1-monostearoyl-rac-glycerol. Prefers to attack alpha positions to beta positions of monoacylglycerol, but shows no stereospecificity on mono- and diacylglycerol. The sequence is that of Secreted mono- and diacylglycerol lipase A from Penicillium camembertii.